The sequence spans 386 residues: O-phospho-L-seryl-tRNA:Cys-tRNA synthase (386 aa).

Pyridoxal 5'-phosphate is bound by residues 89–90, Asn-196, and 219–221; these read AR and SGH. At Lys-222 the chain carries N6-(pyridoxal phosphate)lysine.

Belongs to the SepCysS family. As to quaternary structure, homodimer. Interacts with SepRS. It depends on pyridoxal 5'-phosphate as a cofactor.

It carries out the reaction O-phospho-L-seryl-tRNA(Cys) + hydrogen sulfide + H(+) = L-cysteinyl-tRNA(Cys) + phosphate. In terms of biological role, converts O-phospho-L-seryl-tRNA(Cys) (Sep-tRNA(Cys)) to L-cysteinyl-tRNA(Cys) (Cys-tRNA(Cys)). This is O-phospho-L-seryl-tRNA:Cys-tRNA synthase from Methanosarcina mazei (strain ATCC BAA-159 / DSM 3647 / Goe1 / Go1 / JCM 11833 / OCM 88) (Methanosarcina frisia).